A 185-amino-acid polypeptide reads, in one-letter code: Elongation factor P (185 aa).

Belongs to the elongation factor P family.

The protein localises to the cytoplasm. The protein operates within protein biosynthesis; polypeptide chain elongation. Its function is as follows. Involved in peptide bond synthesis. Stimulates efficient translation and peptide-bond synthesis on native or reconstituted 70S ribosomes in vitro. Probably functions indirectly by altering the affinity of the ribosome for aminoacyl-tRNA, thus increasing their reactivity as acceptors for peptidyl transferase. The protein is Elongation factor P of Clostridium tetani (strain Massachusetts / E88).